Reading from the N-terminus, the 128-residue chain is Mini-ribonuclease 3 (128 aa).

Residue Asp-17 is part of the active site.

This sequence belongs to the MrnC RNase family. As to quaternary structure, homodimer. The cofactor is Mg(2+).

It is found in the cytoplasm. Involved in correct processing of both the 5' and 3' ends of 23S rRNA precursor. Processes 30S rRNA precursor transcript even in absence of ribonuclease 3 (Rnc); Rnc processes 30S rRNA into smaller rRNA precursors. This is Mini-ribonuclease 3 from Streptococcus pneumoniae (strain ATCC BAA-255 / R6).